Reading from the N-terminus, the 512-residue chain is Maturase K (512 aa).

The protein belongs to the intron maturase 2 family. MatK subfamily.

The protein localises to the plastid. It localises to the chloroplast. In terms of biological role, usually encoded in the trnK tRNA gene intron. Probably assists in splicing its own and other chloroplast group II introns. The protein is Maturase K of Lilium longiflorum (Trumpet lily).